A 129-amino-acid polypeptide reads, in one-letter code: Large ribosomal subunit protein bL32m (129 aa).

A mitochondrion-targeting transit peptide spans 1 to 63; it reads MAAMTAAAAA…LEDIWEGILR (63 aa). Residues cysteine 94, cysteine 97, cysteine 107, and cysteine 110 each contribute to the Zn(2+) site.

Belongs to the bacterial ribosomal protein bL32 family. Component of the mitochondrial large ribosomal subunit (mt-LSU). Mature N.crassa 74S mitochondrial ribosomes consist of a small (37S) and a large (54S) subunit. The 37S small subunit contains a 16S ribosomal RNA (16S mt-rRNA) and 32 different proteins. The 54S large subunit contains a 23S rRNA (23S mt-rRNA) and 42 different proteins. bL32m has a zinc binding site. MRPL32 precursor is processed by the m-AAA protease (composed of YTA12/RCA1 and YTA10/AFG3), which cleaves the N-terminal transit peptide. Cleavage by the m-AAA protease takes place prior to assembly into the large subunit, an essential step for mitochondrial ribosome (mitoribosome) assembly. Proper processing by the m-AAA protease is dependent on the zinc-binding region within the tightly folded C-terminal domain of MRPL32: zinc-dependent folding halts degradation initiated from the N-terminus and triggers the release of mature MRPL32.

The protein localises to the mitochondrion. Its function is as follows. Component of the mitochondrial ribosome (mitoribosome), a dedicated translation machinery responsible for the synthesis of mitochondrial genome-encoded proteins, including at least some of the essential transmembrane subunits of the mitochondrial respiratory chain. The mitoribosomes are attached to the mitochondrial inner membrane and translation products are cotranslationally integrated into the membrane. This is Large ribosomal subunit protein bL32m (mrpl32) from Neurospora crassa (strain ATCC 24698 / 74-OR23-1A / CBS 708.71 / DSM 1257 / FGSC 987).